Here is a 304-residue protein sequence, read N- to C-terminus: Xylanase inhibitor protein 1 (304 aa).

The first 29 residues, 1–29, serve as a signal peptide directing secretion; it reads MVALGRRSWLVPLAMVLAVSSCLAGPAMA. The 271-residue stretch at 34–304 folds into the GH18 domain; the sequence is GQMTVFWGRN…GYGKTVKYWA (271 aa). Disulfide bonds link Cys-53-Cys-93 and Cys-190-Cys-219.

Belongs to the glycosyl hydrolase 18 family. Xylanase inhibitor subfamily. In terms of assembly, binds to fungal GH11 xylanases. In terms of tissue distribution, constitutively expressed in shoots.

Its subcellular location is the secreted. Fungal xylanase inhibitor. Possesses competitive inhibiting activity against fungal endo-1,4-beta-D-xylanases belonging to glycoside hydrolase family 11 (GH11). May function in plant defense against secreted fungal pathogen xylanases. Is similar to class III chitinases, but does not exhibit chitinase activity. This is Xylanase inhibitor protein 1 from Oryza sativa subsp. japonica (Rice).